The chain runs to 519 residues: MPSTQTLRLIPRKLTLAQLRQVYDSPVQVSLDDSAYKDIDASHDCVKEIIARDKSAYGINTGFGLLAKTRISDDQLGLLQYNLIVSHSVGTGERLEDGVVRLIMVMKVASLAQGFSGVRRKVIDGLIGLINHDIIPHIPAKGSVGASGDLAPLSHMTLTLLGQGTCYINGQEMSAKDALAQAGLEPVTLAAKEGLALINGTQVSTALTLRGYFLARDLVSTATVVGALSVDAARGSDSPFDARIHELRGHHGQIQVAKAHRRLIAGSEIRASHTENDDRVQDPYCLRCQPQVVGACLDIINQAGHTLLIEANAVTDNPLIFRDEDGPVAISGGNFHAEPVAFAADTLALAIAEIGSMSERRVALLIDATLNGGLPPFLVDNPGVNSGFMIAHVTAAALASENKSLAHPASVDSIPTSANQEDHVSMATFAGRRLYDMAQNTATIVGIELLAAGQGIDFHKGLQTSELLTKAHALLREKVSFYDKDRYLAPDIEAAKQLVLSAALNEHWSELRADWFLQD.

The segment at residues 146–148 is a cross-link (5-imidazolinone (Ala-Gly)); that stretch reads ASG. Position 147 is a 2,3-didehydroalanine (Ser) (Ser147).

This sequence belongs to the PAL/histidase family. Post-translationally, contains an active site 4-methylidene-imidazol-5-one (MIO), which is formed autocatalytically by cyclization and dehydration of residues Ala-Ser-Gly.

The protein localises to the cytoplasm. The enzyme catalyses L-histidine = trans-urocanate + NH4(+). It functions in the pathway amino-acid degradation; L-histidine degradation into L-glutamate; N-formimidoyl-L-glutamate from L-histidine: step 1/3. This Psychrobacter sp. (strain PRwf-1) protein is Histidine ammonia-lyase.